A 284-amino-acid chain; its full sequence is 2-dehydro-3-deoxyphosphooctonate aldolase (284 aa).

This sequence belongs to the KdsA family.

Its subcellular location is the cytoplasm. The enzyme catalyses D-arabinose 5-phosphate + phosphoenolpyruvate + H2O = 3-deoxy-alpha-D-manno-2-octulosonate-8-phosphate + phosphate. It participates in carbohydrate biosynthesis; 3-deoxy-D-manno-octulosonate biosynthesis; 3-deoxy-D-manno-octulosonate from D-ribulose 5-phosphate: step 2/3. It functions in the pathway bacterial outer membrane biogenesis; lipopolysaccharide biosynthesis. The sequence is that of 2-dehydro-3-deoxyphosphooctonate aldolase from Salmonella paratyphi A (strain ATCC 9150 / SARB42).